The primary structure comprises 253 residues: NAD-dependent protein deacetylase (253 aa).

In terms of domain architecture, Deacetylase sirtuin-type spans 3-253 (APSLSSGVEQ…GETLGPFVGN (251 aa)). Positions 29, 33, 40, 41, 106, 108, 109, and 126 each coordinate NAD(+). F40 provides a ligand contact to nicotinamide. Positions 108 and 109 each coordinate nicotinamide. Residue H126 is the Proton acceptor of the active site. C134, C137, C159, and C162 together coordinate Zn(2+). The NAD(+) site is built by S200, S201, N225, D242, and I243.

It belongs to the sirtuin family. Class U subfamily. Zn(2+) serves as cofactor.

Its subcellular location is the cytoplasm. It catalyses the reaction N(6)-acetyl-L-lysyl-[protein] + NAD(+) + H2O = 2''-O-acetyl-ADP-D-ribose + nicotinamide + L-lysyl-[protein]. In terms of biological role, NAD-dependent protein deacetylase which modulates the activities of several enzymes which are inactive in their acetylated form. This Rhodopseudomonas palustris (strain ATCC BAA-98 / CGA009) protein is NAD-dependent protein deacetylase.